The sequence spans 75 residues: UPF0352 protein KPN78578_25810 (75 aa).

It belongs to the UPF0352 family.

This chain is UPF0352 protein KPN78578_25810, found in Klebsiella pneumoniae subsp. pneumoniae (strain ATCC 700721 / MGH 78578).